Consider the following 20-residue polypeptide: Cytochrome c oxidase subunit 7B-liver, mitochondrial (20 aa).

This sequence belongs to the cytochrome c oxidase VIIb family. As to quaternary structure, component of the cytochrome c oxidase (complex IV, CIV), a multisubunit enzyme composed of 14 subunits. The complex is composed of a catalytic core of 3 subunits MT-CO1, MT-CO2 and MT-CO3, encoded in the mitochondrial DNA, and 11 supernumerary subunits COX4I, COX5A, COX5B, COX6A, COX6B, COX6C, COX7A, COX7B, COX7C, COX8 and NDUFA4, which are encoded in the nuclear genome. The complex exists as a monomer or a dimer and forms supercomplexes (SCs) in the inner mitochondrial membrane with NADH-ubiquinone oxidoreductase (complex I, CI) and ubiquinol-cytochrome c oxidoreductase (cytochrome b-c1 complex, complex III, CIII), resulting in different assemblies (supercomplex SCI(1)III(2)IV(1) and megacomplex MCI(2)III(2)IV(2)).

It localises to the mitochondrion inner membrane. It catalyses the reaction 4 Fe(II)-[cytochrome c] + O2 + 8 H(+)(in) = 4 Fe(III)-[cytochrome c] + 2 H2O + 4 H(+)(out). It participates in energy metabolism; oxidative phosphorylation. Functionally, component of the cytochrome c oxidase, the last enzyme in the mitochondrial electron transport chain which drives oxidative phosphorylation. The respiratory chain contains 3 multisubunit complexes succinate dehydrogenase (complex II, CII), ubiquinol-cytochrome c oxidoreductase (cytochrome b-c1 complex, complex III, CIII) and cytochrome c oxidase (complex IV, CIV), that cooperate to transfer electrons derived from NADH and succinate to molecular oxygen, creating an electrochemical gradient over the inner membrane that drives transmembrane transport and the ATP synthase. Cytochrome c oxidase is the component of the respiratory chain that catalyzes the reduction of oxygen to water. Electrons originating from reduced cytochrome c in the intermembrane space (IMS) are transferred via the dinuclear copper A center (CU(A)) of subunit 2 and heme A of subunit 1 to the active site in subunit 1, a binuclear center (BNC) formed by heme A3 and copper B (CU(B)). The BNC reduces molecular oxygen to 2 water molecules using 4 electrons from cytochrome c in the IMS and 4 protons from the mitochondrial matrix. The protein is Cytochrome c oxidase subunit 7B-liver, mitochondrial of Thunnus obesus (Bigeye tuna).